The sequence spans 274 residues: MQNITQSWFVQGMIKATTDAWLKGWDERNGGNLTLRLDDADIAPYHDNFHQQPRYIPLSQPMPLLANTPFIVTGSGKFFRNVQLDPAANLGIVKVDSDGAGYHILWGLTNEAVPTSELPAHFLSHCERIKATNGKDRVIMHCHATNLIALTYVLENDTAVFTRQLWEGSTECLVVFPDGVGILPWMVPGTDEIGQATAQEMQKHSLVLWPFHGVFGSGPTLDETFGLIDTAEKSAQILVKVYSMGGMKQTISREELIALGQRFGVTPLASALAL.

Glutamate 117 is a catalytic residue. 3 residues coordinate Zn(2+): histidine 141, histidine 143, and histidine 212.

Belongs to the aldolase class II family. RhaD subfamily. Homotetramer. Requires Zn(2+) as cofactor.

The protein resides in the cytoplasm. The enzyme catalyses L-rhamnulose 1-phosphate = (S)-lactaldehyde + dihydroxyacetone phosphate. It functions in the pathway carbohydrate degradation; L-rhamnose degradation; glycerone phosphate from L-rhamnose: step 3/3. Functionally, catalyzes the reversible cleavage of L-rhamnulose-1-phosphate to dihydroxyacetone phosphate (DHAP) and L-lactaldehyde. The polypeptide is Rhamnulose-1-phosphate aldolase (Escherichia coli O45:K1 (strain S88 / ExPEC)).